Consider the following 172-residue polypeptide: uncharacterized protein (172 aa).

Residues 109-129 traverse the membrane as a helical segment; that stretch reads MLLLYLYYNLLLLTASTPLTF.

It localises to the membrane. This is an uncharacterized protein from Saccharomyces cerevisiae (strain ATCC 204508 / S288c) (Baker's yeast).